Reading from the N-terminus, the 359-residue chain is Outer membrane protein assembly factor BamC (359 aa).

The signal sequence occupies residues 1-34 (MASLFDKNSFQMTRLQKTAVAKVVGVSLIMLLAA). C35 is lipidated: N-palmitoyl cysteine. C35 carries the S-diacylglycerol cysteine lipid modification.

Belongs to the BamC family. As to quaternary structure, part of the Bam complex, which is composed of the outer membrane protein BamA, and four lipoproteins BamB, BamC, BamD and BamE.

It is found in the cell outer membrane. Functionally, part of the outer membrane protein assembly complex, which is involved in assembly and insertion of beta-barrel proteins into the outer membrane. This is Outer membrane protein assembly factor BamC from Rahnella sp. (strain Y9602).